Consider the following 339-residue polypeptide: MNDFKSIIGKLATGVTLSREESAGAFDAMMSGEATPSQMGALLMALRVRGETVEEITGAVAAMRSKMLRVTAPADAVDVVGTGGDGSGSVNVSTCASFIVAGAGVPVAKHGNRALSSKSGAADVLAALGVKIDITPAEVGRCIKEAGIGFMFAPTHHPAMKNVGPTRVELATRTIFNLLGPLSNPAGVTRQMVGVFSRQWVQPLAQVLKNLGSESAWVVHGSDGLDEITISGPTFVAALADGKITTFEITPEDAGLPRAGADVLKGGDAEANAVALQGVLDGKPSAYRDVALLNAAAALIVGGRANTLKDGVAQGAQALDSGAAAAKLKQLIAVSNAAA.

5-phospho-alpha-D-ribose 1-diphosphate contacts are provided by residues G81, 84–85 (GD), S89, 91–94 (NVST), 109–117 (KHGNRALSS), and A121. G81 is a binding site for anthranilate. Residue S93 coordinates Mg(2+). Anthranilate is bound at residue N112. Residue R167 participates in anthranilate binding. Positions 226 and 227 each coordinate Mg(2+).

Belongs to the anthranilate phosphoribosyltransferase family. In terms of assembly, homodimer. Mg(2+) serves as cofactor.

It catalyses the reaction N-(5-phospho-beta-D-ribosyl)anthranilate + diphosphate = 5-phospho-alpha-D-ribose 1-diphosphate + anthranilate. Its pathway is amino-acid biosynthesis; L-tryptophan biosynthesis; L-tryptophan from chorismate: step 2/5. Its function is as follows. Catalyzes the transfer of the phosphoribosyl group of 5-phosphorylribose-1-pyrophosphate (PRPP) to anthranilate to yield N-(5'-phosphoribosyl)-anthranilate (PRA). This chain is Anthranilate phosphoribosyltransferase, found in Rhodopseudomonas palustris (strain BisB18).